Reading from the N-terminus, the 324-residue chain is tRNA-dihydrouridine(20a/20b) synthase [NAD(P)+]-like (324 aa).

Residues 33 to 35 and glutamine 87 each bind FMN; that span reads PMV. The Proton donor role is filled by cysteine 116. FMN is bound by residues lysine 158, histidine 186, 216–218, and 240–241; these read NGD and AR.

Belongs to the Dus family. Dus4 subfamily. The cofactor is FMN.

It catalyses the reaction 5,6-dihydrouridine(20a) in tRNA + NADP(+) = uridine(20a) in tRNA + NADPH + H(+). It carries out the reaction 5,6-dihydrouridine(20a) in tRNA + NAD(+) = uridine(20a) in tRNA + NADH + H(+). The catalysed reaction is 5,6-dihydrouridine(20b) in tRNA + NAD(+) = uridine(20b) in tRNA + NADH + H(+). The enzyme catalyses 5,6-dihydrouridine(20b) in tRNA + NADP(+) = uridine(20b) in tRNA + NADPH + H(+). Its function is as follows. Catalyzes the synthesis of dihydrouridine, a modified base found in the D-loop of most tRNAs. The sequence is that of tRNA-dihydrouridine(20a/20b) synthase [NAD(P)+]-like (Dus4l) from Mus musculus (Mouse).